The chain runs to 260 residues: tRNA pseudouridine synthase A (260 aa).

Asp51 serves as the catalytic Nucleophile. Tyr109 is a substrate binding site.

It belongs to the tRNA pseudouridine synthase TruA family. Homodimer.

The enzyme catalyses uridine(38/39/40) in tRNA = pseudouridine(38/39/40) in tRNA. In terms of biological role, formation of pseudouridine at positions 38, 39 and 40 in the anticodon stem and loop of transfer RNAs. In Albidiferax ferrireducens (strain ATCC BAA-621 / DSM 15236 / T118) (Rhodoferax ferrireducens), this protein is tRNA pseudouridine synthase A.